We begin with the raw amino-acid sequence, 270 residues long: Cyclic pyranopterin monophosphate synthase, mitochondrial (270 aa).

The transit peptide at 1–32 (MISTLRRAVFLRRFPAVVSPIKRAFSSRIDDE) directs the protein to the mitochondrion. Substrate is bound by residues 187 to 189 (LCH) and 225 to 226 (ME). Residue Asp240 is part of the active site.

Belongs to the MoaC family. In terms of assembly, homohexamer. As to expression, abundantly expressed in the roots.

It localises to the mitochondrion matrix. It carries out the reaction (8S)-3',8-cyclo-7,8-dihydroguanosine 5'-triphosphate = cyclic pyranopterin phosphate + diphosphate. It participates in cofactor biosynthesis; molybdopterin biosynthesis. Functionally, catalyzes the conversion of (8S)-3',8-cyclo-7,8-dihydroguanosine 5'-triphosphate to cyclic pyranopterin monophosphate (cPMP). This is Cyclic pyranopterin monophosphate synthase, mitochondrial (CNX3) from Arabidopsis thaliana (Mouse-ear cress).